Here is a 190-residue protein sequence, read N- to C-terminus: Dynactin subunit 6 (190 aa).

T186 is subject to Phosphothreonine.

It belongs to the dynactin subunits 5/6 family. Dynactin subunit 6 subfamily. As to quaternary structure, subunit of dynactin, a multiprotein complex part of a tripartite complex with dynein and a adapter, such as BICDL1, BICD2 or HOOK3. The dynactin complex is built around ACTR1A/ACTB filament and consists of an actin-related filament composed of a shoulder domain, a pointed end and a barbed end. Its length is defined by its flexible shoulder domain. The soulder is composed of 2 DCTN1 subunits, 4 DCTN2 and 2 DCTN3. The 4 DCNT2 (via N-terminus) bind the ACTR1A filament and act as molecular rulers to determine the length. The pointed end is important for binding dynein-dynactin cargo adapters. Consists of 4 subunits: ACTR10, DCNT4, DCTN5 and DCTN6. Within the complex DCTN6 forms a heterodimer with DCTN5. The barbed end is composed of a CAPZA1:CAPZB heterodimers, which binds ACTR1A/ACTB filament and dynactin and stabilizes dynactin. Interacts with PLK1. Interacts with N4BP2L1. Phosphorylation at Thr-186 by CDK1 during mitotic prometaphase creates a binding site for PLK1 that facilitates its recruitment to kinetochores.

It is found in the cytoplasm. The protein localises to the cytoskeleton. The protein resides in the chromosome. Its subcellular location is the centromere. It localises to the kinetochore. Part of the dynactin complex that activates the molecular motor dynein for ultra-processive transport along microtubules. The chain is Dynactin subunit 6 (DCTN6) from Sus scrofa (Pig).